We begin with the raw amino-acid sequence, 716 residues long: Phospholipid phosphatase-related protein type 3 (716 aa).

A run of 3 helical transmembrane segments spans residues 18–38, 70–90, and 131–151; these read LPCF…SLYF, LIPL…SIMV, and FVGV…VIQL. An N-linked (GlcNAc...) asparagine glycan is attached at N167. Transmembrane regions (helical) follow at residues 205 to 225, 231 to 251, and 261 to 281; these read HATL…SVIS, LKPI…LTQI, and VYAG…HAVG. A disordered region spans residues 311 to 334; the sequence is SMYQQNKSVSTDELGPPGRLEGVP. The segment covering 312 to 321 has biased composition (polar residues); it reads MYQQNKSVST. The N-linked (GlcNAc...) asparagine glycan is linked to N316. Phosphoserine occurs at positions 320 and 351. Position 374 is a phosphothreonine (T374). A disordered region spans residues 416–488; sequence GRGLGLPDEA…RVILPPRPGP (73 aa). S426 is subject to Phosphoserine. The span at 437 to 460 shows a compositional bias: acidic residues; it reads VAEEEEEEEEEEEEEEEEEEEEEG. Position 506 is a phosphoserine (S506). Positions 548 to 589 are disordered; that stretch reads AMSKAAGGPKAETASSSSASSDSSQYRSPSDRDSASIVTIDA. Over residues 562–575 the composition is skewed to low complexity; the sequence is SSSSASSDSSQYRS. At S641 the chain carries Phosphoserine. The disordered stretch occupies residues 664 to 694; that stretch reads GEGLPPPGASEGALGAGSRESTLRRQVGALG.

This sequence belongs to the PA-phosphatase related phosphoesterase family.

Its subcellular location is the membrane. This Rattus norvegicus (Rat) protein is Phospholipid phosphatase-related protein type 3.